Reading from the N-terminus, the 154-residue chain is Interleukin-2 (154 aa).

A signal peptide spans 1 to 20; sequence MYRMQLLSCIALSLALVTNS. Thr-23 is a glycosylation site (O-linked (GalNAc...) threonine). Cys-78 and Cys-126 are joined by a disulfide.

The protein belongs to the IL-2 family.

It localises to the secreted. Functionally, cytokine produced by activated CD4-positive helper T-cells and to a lesser extend activated CD8-positive T-cells and natural killer (NK) cells that plays pivotal roles in the immune response and tolerance. Binds to a receptor complex composed of either the high-affinity trimeric IL-2R (IL2RA/CD25, IL2RB/CD122 and IL2RG/CD132) or the low-affinity dimeric IL-2R (IL2RB and IL2RG). Interaction with the receptor leads to oligomerization and conformation changes in the IL-2R subunits resulting in downstream signaling starting with phosphorylation of JAK1 and JAK3. In turn, JAK1 and JAK3 phosphorylate the receptor to form a docking site leading to the phosphorylation of several substrates including STAT5. This process leads to activation of several pathways including STAT, phosphoinositide-3-kinase/PI3K and mitogen-activated protein kinase/MAPK pathways. Functions as a T-cell growth factor and can increase NK-cell cytolytic activity as well. Promotes strong proliferation of activated B-cells and subsequently immunoglobulin production. Plays a pivotal role in regulating the adaptive immune system by controlling the survival and proliferation of regulatory T-cells, which are required for the maintenance of immune tolerance. Moreover, participates in the differentiation and homeostasis of effector T-cell subsets, including Th1, Th2, Th17 as well as memory CD8-positive T-cells. The polypeptide is Interleukin-2 (IL2) (Macaca mulatta (Rhesus macaque)).